Consider the following 217-residue polypeptide: ATP phosphoribosyltransferase (217 aa).

The protein belongs to the ATP phosphoribosyltransferase family. Short subfamily. In terms of assembly, heteromultimer composed of HisG and HisZ subunits.

It localises to the cytoplasm. It catalyses the reaction 1-(5-phospho-beta-D-ribosyl)-ATP + diphosphate = 5-phospho-alpha-D-ribose 1-diphosphate + ATP. The protein operates within amino-acid biosynthesis; L-histidine biosynthesis; L-histidine from 5-phospho-alpha-D-ribose 1-diphosphate: step 1/9. In terms of biological role, catalyzes the condensation of ATP and 5-phosphoribose 1-diphosphate to form N'-(5'-phosphoribosyl)-ATP (PR-ATP). Has a crucial role in the pathway because the rate of histidine biosynthesis seems to be controlled primarily by regulation of HisG enzymatic activity. The polypeptide is ATP phosphoribosyltransferase (Burkholderia ambifaria (strain MC40-6)).